The primary structure comprises 479 residues: Aspartyl/glutamyl-tRNA(Asn/Gln) amidotransferase subunit B (479 aa).

This sequence belongs to the GatB/GatE family. GatB subfamily. In terms of assembly, heterotrimer of A, B and C subunits.

The catalysed reaction is L-glutamyl-tRNA(Gln) + L-glutamine + ATP + H2O = L-glutaminyl-tRNA(Gln) + L-glutamate + ADP + phosphate + H(+). It carries out the reaction L-aspartyl-tRNA(Asn) + L-glutamine + ATP + H2O = L-asparaginyl-tRNA(Asn) + L-glutamate + ADP + phosphate + 2 H(+). Functionally, allows the formation of correctly charged Asn-tRNA(Asn) or Gln-tRNA(Gln) through the transamidation of misacylated Asp-tRNA(Asn) or Glu-tRNA(Gln) in organisms which lack either or both of asparaginyl-tRNA or glutaminyl-tRNA synthetases. The reaction takes place in the presence of glutamine and ATP through an activated phospho-Asp-tRNA(Asn) or phospho-Glu-tRNA(Gln). This chain is Aspartyl/glutamyl-tRNA(Asn/Gln) amidotransferase subunit B, found in Alcanivorax borkumensis (strain ATCC 700651 / DSM 11573 / NCIMB 13689 / SK2).